A 284-amino-acid polypeptide reads, in one-letter code: Bifunctional protein FolD (284 aa).

Residues 166–168 and Ile232 contribute to the NADP(+) site; that span reads GAS.

This sequence belongs to the tetrahydrofolate dehydrogenase/cyclohydrolase family. In terms of assembly, homodimer.

The enzyme catalyses (6R)-5,10-methylene-5,6,7,8-tetrahydrofolate + NADP(+) = (6R)-5,10-methenyltetrahydrofolate + NADPH. It carries out the reaction (6R)-5,10-methenyltetrahydrofolate + H2O = (6R)-10-formyltetrahydrofolate + H(+). Its pathway is one-carbon metabolism; tetrahydrofolate interconversion. In terms of biological role, catalyzes the oxidation of 5,10-methylenetetrahydrofolate to 5,10-methenyltetrahydrofolate and then the hydrolysis of 5,10-methenyltetrahydrofolate to 10-formyltetrahydrofolate. This is Bifunctional protein FolD from Pseudomonas putida (strain W619).